Here is a 618-residue protein sequence, read N- to C-terminus: DNA mismatch repair protein MutL (618 aa).

A compositionally biased stretch (low complexity) spans 367 to 381 (EPTAAREPATPRYSG). The segment at 367–402 (EPTAAREPATPRYSGGASGGNGGRQSAGGWPHAQPG) is disordered. Residues 382–392 (GASGGNGGRQS) are compositionally biased toward gly residues.

It belongs to the DNA mismatch repair MutL/HexB family.

Its function is as follows. This protein is involved in the repair of mismatches in DNA. It is required for dam-dependent methyl-directed DNA mismatch repair. May act as a 'molecular matchmaker', a protein that promotes the formation of a stable complex between two or more DNA-binding proteins in an ATP-dependent manner without itself being part of a final effector complex. The chain is DNA mismatch repair protein MutL from Salmonella heidelberg (strain SL476).